A 98-amino-acid chain; its full sequence is Large ribosomal subunit protein eL14 (98 aa).

This sequence belongs to the eukaryotic ribosomal protein eL14 family.

The protein is Large ribosomal subunit protein eL14 of Thermofilum pendens (strain DSM 2475 / Hrk 5).